Consider the following 67-residue polypeptide: Alpha-actitoxin-Ms11a-3 (67 aa).

The N-terminal stretch at 1–24 (MASKIFFVLAVFLVMSAVLPESFA) is a signal peptide. 3 disulfides stabilise this stretch: cysteine 26/cysteine 41, cysteine 33/cysteine 46, and cysteine 40/cysteine 61. The residue at position 66 (lysine 66) is a Lysine amide.

Its subcellular location is the secreted. It is found in the nematocyst. In terms of biological role, alpha-toxins act on postsynaptic membranes, they bind to the nicotinic acetylcholine receptors (nAChR) and thus inhibit them. This toxin shows inhibition against mouse alpha-1-beta-1-delta-epsilon (CHRNA1-CHRNB1-CHRND-CHRNE) (IC(50)=1215 nM), rat alpha-3-beta-4/CHRNA3-CHRNB4 (IC(50)=5.173 uM), rat alpha-7/CHRNA7 (IC(50)=4.786 uM), human alpha-7/CHRNA7 (IC(50)=8.869 uM), and rat alpha-9-alpha-10/CHRNA9-CHRNA10 (IC(50)=202 nM). Also competes with alpha-bungarotoxin for binding to orthosteric sites on muscle-type T.carlifornicus (IC(50)=256 nM) and human alpha-7/CHRNA7 nAChRs (IC(50)=19.81 uM). The chain is Alpha-actitoxin-Ms11a-3 from Metridium senile (Brown sea anemone).